Here is a 392-residue protein sequence, read N- to C-terminus: 3-ketoacyl-CoA thiolase (392 aa).

The active-site Acyl-thioester intermediate is the Cys-95. Active-site proton acceptor residues include His-347 and Cys-377.

The protein belongs to the thiolase-like superfamily. Thiolase family. As to quaternary structure, heterotetramer of two alpha chains (FadB) and two beta chains (FadA).

The protein resides in the cytoplasm. It catalyses the reaction an acyl-CoA + acetyl-CoA = a 3-oxoacyl-CoA + CoA. It functions in the pathway lipid metabolism; fatty acid beta-oxidation. Catalyzes the final step of fatty acid oxidation in which acetyl-CoA is released and the CoA ester of a fatty acid two carbons shorter is formed. This is 3-ketoacyl-CoA thiolase from Chromohalobacter salexigens (strain ATCC BAA-138 / DSM 3043 / CIP 106854 / NCIMB 13768 / 1H11).